The sequence spans 311 residues: Olfactory receptor 8H1 (311 aa).

Residues 1 to 25 (MGRRNNTNVPDFILTGLSDSEEVQM) are Extracellular-facing. The N-linked (GlcNAc...) asparagine glycan is linked to asparagine 5. The helical transmembrane segment at 26 to 46 (ALFILFLLIYLITMLGNVGMI) threads the bilayer. Residues 47–54 (LIIRLDLQ) are Cytoplasmic-facing. Residues 55–75 (LHTPMYFFLTHLSFIDLSYST) traverse the membrane as a helical segment. Topologically, residues 76 to 98 (VITPKTLANLLTSNYISFMGCFA) are extracellular. Cysteine 96 and cysteine 188 are oxidised to a cystine. Residues 99–119 (QMFFFVFLGAAECFLLSSMAY) form a helical membrane-spanning segment. Residues 120–138 (DRYVAICSPLRYPVIMSKR) are Cytoplasmic-facing. The chain crosses the membrane as a helical span at residues 139–159 (LCCALVTGPYVISFINSFVNV). The Extracellular portion of the chain corresponds to 160–196 (VWMSRLHFCDSNVVRHFFCDTSPILALSCMDTYDIEI). The helical transmembrane segment at 197-216 (MIHILAGSTLMVSLITISAS) threads the bilayer. The Cytoplasmic portion of the chain corresponds to 217–236 (YVSILSTILKINSTSGKQKA). Residues 237–257 (LSTCASHLLGVTIFYGTMIFT) form a helical membrane-spanning segment. Residues 258–270 (YLKPRKSYSLGRD) are Extracellular-facing. A helical transmembrane segment spans residues 271-291 (QVASVFYTIVIPMLNPLIYSL). The Cytoplasmic portion of the chain corresponds to 292 to 311 (RNKEVKNALIRVMQRRQDSR).

Belongs to the G-protein coupled receptor 1 family.

It localises to the cell membrane. Functionally, odorant receptor. This Homo sapiens (Human) protein is Olfactory receptor 8H1 (OR8H1).